The primary structure comprises 102 residues: Small ribosomal subunit protein uS10 (102 aa).

The protein belongs to the universal ribosomal protein uS10 family. As to quaternary structure, part of the 30S ribosomal subunit.

In terms of biological role, involved in the binding of tRNA to the ribosomes. The polypeptide is Small ribosomal subunit protein uS10 (Hyperthermus butylicus (strain DSM 5456 / JCM 9403 / PLM1-5)).